Reading from the N-terminus, the 254-residue chain is Thiazole synthase (254 aa).

The active-site Schiff-base intermediate with DXP is the K95. Residues G156, 182 to 183 (AG), and 204 to 205 (NT) each bind 1-deoxy-D-xylulose 5-phosphate.

This sequence belongs to the ThiG family. As to quaternary structure, homotetramer. Forms heterodimers with either ThiH or ThiS.

Its subcellular location is the cytoplasm. It catalyses the reaction [ThiS sulfur-carrier protein]-C-terminal-Gly-aminoethanethioate + 2-iminoacetate + 1-deoxy-D-xylulose 5-phosphate = [ThiS sulfur-carrier protein]-C-terminal Gly-Gly + 2-[(2R,5Z)-2-carboxy-4-methylthiazol-5(2H)-ylidene]ethyl phosphate + 2 H2O + H(+). It functions in the pathway cofactor biosynthesis; thiamine diphosphate biosynthesis. Catalyzes the rearrangement of 1-deoxy-D-xylulose 5-phosphate (DXP) to produce the thiazole phosphate moiety of thiamine. Sulfur is provided by the thiocarboxylate moiety of the carrier protein ThiS. In vitro, sulfur can be provided by H(2)S. This chain is Thiazole synthase, found in Shewanella piezotolerans (strain WP3 / JCM 13877).